The following is a 451-amino-acid chain: Phosphoglucosamine mutase (451 aa).

Residue S101 is the Phosphoserine intermediate of the active site. Mg(2+) is bound by residues S101, D240, D242, and D244. S101 bears the Phosphoserine mark.

The protein belongs to the phosphohexose mutase family. Mg(2+) serves as cofactor. Activated by phosphorylation.

It carries out the reaction alpha-D-glucosamine 1-phosphate = D-glucosamine 6-phosphate. In terms of biological role, catalyzes the conversion of glucosamine-6-phosphate to glucosamine-1-phosphate. This Streptococcus pyogenes serotype M1 protein is Phosphoglucosamine mutase.